Reading from the N-terminus, the 205-residue chain is Potassium-transporting ATPase KdpC subunit (205 aa).

The chain crosses the membrane as a helical span at residues 9–29; sequence VFAVLFLFILGFVYPTVTSLI.

It belongs to the KdpC family. As to quaternary structure, the system is composed of three essential subunits: KdpA, KdpB and KdpC.

The protein resides in the cell membrane. In terms of biological role, part of the high-affinity ATP-driven potassium transport (or Kdp) system, which catalyzes the hydrolysis of ATP coupled with the electrogenic transport of potassium into the cytoplasm. This subunit acts as a catalytic chaperone that increases the ATP-binding affinity of the ATP-hydrolyzing subunit KdpB by the formation of a transient KdpB/KdpC/ATP ternary complex. In Thermoplasma acidophilum (strain ATCC 25905 / DSM 1728 / JCM 9062 / NBRC 15155 / AMRC-C165), this protein is Potassium-transporting ATPase KdpC subunit.